The following is a 339-amino-acid chain: Heat-inducible transcription repressor HrcA (339 aa).

Belongs to the HrcA family.

Negative regulator of class I heat shock genes (grpE-dnaK-dnaJ and groELS operons). Prevents heat-shock induction of these operons. The sequence is that of Heat-inducible transcription repressor HrcA from Thermotoga neapolitana (strain ATCC 49049 / DSM 4359 / NBRC 107923 / NS-E).